Here is a 50-residue protein sequence, read N- to C-terminus: Metallothionein zym1 (50 aa).

Zn(2+)-binding residues include Cys-7, Cys-15, Cys-17, Cys-21, Cys-23, Cys-26, Cys-30, Cys-32, Cys-40, Cys-42, Cys-45, and Cys-47.

The protein belongs to the metallothionein superfamily.

It localises to the cytoplasm. It is found in the nucleus. Metallothionein involved in tolerance to zinc and cadmium. Binds four zinc ions. This Schizosaccharomyces pombe (strain 972 / ATCC 24843) (Fission yeast) protein is Metallothionein zym1 (zym1).